Reading from the N-terminus, the 459-residue chain is Alcohol acyl transferase 1 allele GSa (459 aa).

Catalysis depends on proton acceptor residues histidine 164 and asparagine 385.

This sequence belongs to the plant acyltransferase family. In terms of tissue distribution, highly expressed in the cortex and skin of ripe fruit.

It catalyses the reaction butan-1-ol + acetyl-CoA = butyl acetate + CoA. The catalysed reaction is butan-1-ol + butanoyl-CoA = butyl butanoate + CoA. It carries out the reaction butan-1-ol + hexanoyl-CoA = butyl hexanoate + CoA. The enzyme catalyses hexan-1-ol + butanoyl-CoA = hexyl butanoate + CoA. It catalyses the reaction hexan-1-ol + acetyl-CoA = hexyl acetate + CoA. The catalysed reaction is 2-methylbutan-1-ol + butanoyl-CoA = 2-methylbutyl butanoate + CoA. It carries out the reaction ethanol + butanoyl-CoA = ethyl butanoate + CoA. The enzyme catalyses hexanoyl-CoA + ethanol = ethyl hexanoate + CoA. Involved in the biosynthesis of volatile esters which confer ripe apple fruit flavor. Alcohol acyl transferase that can use a wide range of alcohols as substrate, including 2-methylbutanol, hexanol and ethanol, to produce esters such as butyl butanoate, butyl hexanoate, hexyl butanoate, ethyl butanoate and ethyl hexanoate and, to some extent, 2-methylbutyl acetate (2MBA), butyl acetate, hexyl acetate and 2-methylbutyl butanoate (2MBB). The protein is Alcohol acyl transferase 1 allele GSa of Malus domestica (Apple).